We begin with the raw amino-acid sequence, 2731 residues long: Putative mediator of RNA polymerase II transcription subunit 12 (2731 aa).

Coiled coils occupy residues 5 to 37 (QQIL…QQQQ), 75 to 108 (HIQQ…QQVH), 141 to 189 (QQIH…QQQQ), and 275 to 304 (IQQL…QQQQ). Disordered regions lie at residues 29–57 (QQQM…HMIH) and 101–145 (QQQQ…QIHQ). Residues 310-320 (QPQQQQQQQQP) are compositionally biased toward low complexity. Disordered regions lie at residues 310-376 (QPQQ…DDKS), 432-451 (TQKS…RPVP), 685-708 (LGHG…QQPQ), and 1251-1341 (RNNN…QQKS). The span at 327–337 (QNPSYHSQSQI) shows a compositional bias: polar residues. Residues 347–361 (KKYEIQKPADKKELG) are compositionally biased toward basic and acidic residues. Basic residues predominate over residues 688 to 701 (GHGHGHGHHSHSHS). Low complexity predominate over residues 1251–1268 (RNNNNNNKNKNNNKQSNN). 2 stretches are compositionally biased toward acidic residues: residues 1275–1298 (NGEE…DNDE) and 1305–1326 (NDNE…DDQM). Coiled-coil stretches lie at residues 1316-1344 (EDED…SNEN) and 1375-1433 (KLKK…DEEL). Disordered regions lie at residues 1778–1825 (HDDN…NNNG), 1892–1958 (TQSS…NNTT), 2212–2258 (SSSS…NNVK), 2307–2351 (TSSV…QQQQ), 2472–2532 (EIEK…KPQT), and 2705–2731 (HQQI…NNYK). Composition is skewed to low complexity over residues 1783 to 1824 (ENNN…NNNN), 1892 to 1909 (TQSS…QSPT), 1916 to 1958 (NSTN…NNTT), 2212 to 2250 (SSSS…QQQQ), 2307 to 2322 (TSSV…STTS), 2337 to 2351 (QQQT…QQQQ), 2472 to 2501 (EIEK…HQQL), 2508 to 2532 (LQQQ…KPQT), and 2705 to 2720 (HQQI…HQQQ). Positions 2239 to 2270 (TNQQQQQQQQQQADQKNNVKKKLHELYQKIKS) form a coiled coil. Positions 2336–2363 (LQQQTSQQQQQQQQQQQQQSQQHQQQQQ) form a coiled coil. The stretch at 2523 to 2662 (QQLQQQKPQT…QQQQQQLQQL (140 aa)) forms a coiled coil. The span at 2721–2731 (KCSTTKYNNYK) shows a compositional bias: polar residues.

The protein belongs to the Mediator complex subunit 12 family. In terms of assembly, component of the Mediator complex.

The protein resides in the nucleus. In terms of biological role, component of the Mediator complex, a coactivator involved in the regulated transcription of nearly all RNA polymerase II-dependent genes. Mediator functions as a bridge to convey information from gene-specific regulatory proteins to the basal RNA polymerase II transcription machinery. Mediator is recruited to promoters by direct interactions with regulatory proteins and serves as a scaffold for the assembly of a functional preinitiation complex with RNA polymerase II and the general transcription factors. The sequence is that of Putative mediator of RNA polymerase II transcription subunit 12 (med12) from Dictyostelium discoideum (Social amoeba).